The chain runs to 287 residues: Centromere protein P (287 aa).

Residues 1–37 (MDNSVYQVYEDEIQLLEEEIKLLSDKYEDIQQESTFF) are a coiled coil.

Belongs to the CENP-P/CTF19 family. Component of the CENPA-HI complex, at least composed of CENPH, CENPI, CENPK, CENPL, CENPM, CENPO and CENPP.

It localises to the nucleus. The protein localises to the chromosome. Its subcellular location is the centromere. Functionally, component of the CENPA-HI complex, a centromeric complex involved in assembly of kinetochore proteins, mitotic progression and chromosome segregation. In Gallus gallus (Chicken), this protein is Centromere protein P (CENPP).